The sequence spans 434 residues: MSAKWEKTEENTGVLTIEVEADKVNDALDKAFKKVVKKVNVPGFRKGKVPRGLFEKQFGVESLYQDAIDILLPEAYANAVEETGIYPVDRPEIDVESIGKNEPLIVKATVTVKPEVKLGDYKGLEVEVPSTDVTDEDVEAELKKLQEQHAELVVLEEGEIANGDTAVIDFAGYVDGEAFEGGTAENYSLEIGSNSFIPGFEEQLVGLKSGEEKDVEVTFPEEYHAEELAGKPATFKVKVHDIKRKELPELDDEFAKDVNEKVETLDELKNELRSTLEEQKKTASENAVRDSLLEKAAEQAEINVPEAMIETETDRMLQEFGQRLQAQGMNLDMYFQFSGQTEEDMRNQFKEDAEKRVRVNLTLEAIAEAENVEVSEEEIEEEFQKMADMYQRSVEEIKALLAAQGGTDNVKGDLKLRKAIDVLVENSKEVTTES.

One can recognise a PPIase FKBP-type domain in the interval G163–P248.

Belongs to the FKBP-type PPIase family. Tig subfamily.

The protein localises to the cytoplasm. It carries out the reaction [protein]-peptidylproline (omega=180) = [protein]-peptidylproline (omega=0). Its function is as follows. Involved in protein export. Acts as a chaperone by maintaining the newly synthesized protein in an open conformation. Functions as a peptidyl-prolyl cis-trans isomerase. This is Trigger factor from Shouchella clausii (strain KSM-K16) (Alkalihalobacillus clausii).